Reading from the N-terminus, the 367-residue chain is CCCH-type zinc finger protein moe-3 (367 aa).

Over residues 1–15 (MSKVKGDLEKSDKRP) the composition is skewed to basic and acidic residues. Positions 1 to 57 (MSKVKGDLEKSDKRPPSSMSTGSADSGVFSSGVHASSPSHSQGSSSQSGPPSPTTQL) are disordered. Residues 30–49 (SSGVHASSPSHSQGSSSQSG) are compositionally biased toward low complexity. A coiled-coil region spans residues 63–92 (ETANLIAVNEQLRKEIAENKQIQTNQMRAL). The interval 107 to 126 (SISPHHGFPQRPPRGERRMQ) is disordered. 2 consecutive C3H1-type zinc fingers follow at residues 130–158 (SYKT…HGEE) and 172–200 (KYKT…HPDN). Residues 235–268 (NTRNSYNQQPPPMGGLEMQSSPMKSSSDSSHMRS) are disordered. A compositionally biased stretch (low complexity) spans 252–268 (MQSSPMKSSSDSSHMRS).

As to expression, exclusively expressed in the hermaphrodite gonad. Weakly distributed throughout gonadal oocytes from the mitotic stage to the developing diakinesis stage, with expression restricted to the distal region of the gonad.

In terms of biological role, zinc-finger protein that may play a role in oocyte maturation and fertility. The chain is CCCH-type zinc finger protein moe-3 from Caenorhabditis elegans.